Consider the following 400-residue polypeptide: Glycine betaine/proline betaine transport system ATP-binding protein ProV (400 aa).

The ABC transporter domain occupies 29–265 (LSKEQILEKT…PANDYVRTFF (237 aa)). 61 to 68 (GLSGSGKS) contacts ATP. CBS domains follow at residues 282-341 (RTPN…GLDA) and 343-400 (LIDA…VNNG).

It belongs to the ABC transporter superfamily. As to quaternary structure, the complex is composed of two ATP-binding proteins (ProV), two transmembrane proteins (ProW) and a solute-binding protein (ProX).

The protein resides in the cell inner membrane. Its function is as follows. Part of the ProU ABC transporter complex involved in glycine betaine and proline betaine uptake. Probably responsible for energy coupling to the transport system. This is Glycine betaine/proline betaine transport system ATP-binding protein ProV from Escherichia coli (strain K12).